The chain runs to 111 residues: Beta-defensin 126 (111 aa).

The first 20 residues, 1 to 20 (MKSLLFTLAVFMLLAQLVSG), serve as a signal peptide directing secretion. Positions 21–63 (NWYVKKCLNDVGICKKKCKPEEMHVKNGWAMCGKQRDCCVPAD) are in vitro binds to LPS, mediates antimicrobial activity and inhibits LPS-mediated inflammation. Intrachain disulfides connect Cys27–Cys58, Cys34–Cys52, and Cys38–Cys59.

It belongs to the beta-defensin family. In terms of assembly, homodimer or homooligomer; disulfide-linked. Post-translationally, O-glycosylated; glycans contain alpha(2,3)-linked sialic acids.

It localises to the secreted. In terms of biological role, highly glycosylated atypical beta-defensin involved in several aspects of sperm function. Facilitates sperm transport in the female reproductive tract and contributes to sperm protection against immunodetection; both functions are probably implicating the negative surface charge provided by its O-linked oligosaccharides in the sperm glycocalyx. Involved in binding of sperm to oviductal epithelial cells to form a sperm reservoir until ovulation. Release from the sperm surface during capacitation and ovaluation by an elevation of oviductal fluid pH is unmasking other surface components and allows sperm to penetrate the cumulus matrix and bind to the zona pellucida of the oocyte. In vitro has antimicrobial activity and may inhibit LPS-mediated inflammation. This Gorilla gorilla gorilla (Western lowland gorilla) protein is Beta-defensin 126 (DEFB126).